Consider the following 358-residue polypeptide: Aromatic amino acid aminotransferase (358 aa).

Lysine 219 is modified (N6-(pyridoxal phosphate)lysine).

It belongs to the class-II pyridoxal-phosphate-dependent aminotransferase family. As to quaternary structure, homodimer. The cofactor is pyridoxal 5'-phosphate.

It catalyses the reaction an aromatic L-alpha-amino acid + 2-oxoglutarate = an aromatic oxo-acid + L-glutamate. Functionally, aminotransferase that catalyzes the conversion of aromatic amino acids and 2-oxoglutarate into corresponding aromatic oxo acids and L-glutamate. In Nocardia farcinica (strain IFM 10152), this protein is Aromatic amino acid aminotransferase.